The sequence spans 72 residues: Cytochrome c oxidase subunit 2 (72 aa).

Residues 1–14 (MAHPSQLGFQDAAS) lie on the Mitochondrial intermembrane side of the membrane. Residues 15 to 45 (PVMEELLHFHDHALMIVFLISTLVLYIIVAM) traverse the membrane as a helical segment. The Mitochondrial matrix portion of the chain corresponds to 46–72 (VSTKLTNKYXLDSQEIEVIWTXLPAVI).

It belongs to the cytochrome c oxidase subunit 2 family. As to quaternary structure, component of the cytochrome c oxidase (complex IV, CIV), a multisubunit enzyme composed of 14 subunits. The complex is composed of a catalytic core of 3 subunits MT-CO1, MT-CO2 and MT-CO3, encoded in the mitochondrial DNA, and 11 supernumerary subunits COX4I, COX5A, COX5B, COX6A, COX6B, COX6C, COX7A, COX7B, COX7C, COX8 and NDUFA4, which are encoded in the nuclear genome. The complex exists as a monomer or a dimer and forms supercomplexes (SCs) in the inner mitochondrial membrane with NADH-ubiquinone oxidoreductase (complex I, CI) and ubiquinol-cytochrome c oxidoreductase (cytochrome b-c1 complex, complex III, CIII), resulting in different assemblies (supercomplex SCI(1)III(2)IV(1) and megacomplex MCI(2)III(2)IV(2)). Found in a complex with TMEM177, COA6, COX18, COX20, SCO1 and SCO2. Interacts with TMEM177 in a COX20-dependent manner. Interacts with COX20. Interacts with COX16. Cu cation is required as a cofactor.

It is found in the mitochondrion inner membrane. The enzyme catalyses 4 Fe(II)-[cytochrome c] + O2 + 8 H(+)(in) = 4 Fe(III)-[cytochrome c] + 2 H2O + 4 H(+)(out). Component of the cytochrome c oxidase, the last enzyme in the mitochondrial electron transport chain which drives oxidative phosphorylation. The respiratory chain contains 3 multisubunit complexes succinate dehydrogenase (complex II, CII), ubiquinol-cytochrome c oxidoreductase (cytochrome b-c1 complex, complex III, CIII) and cytochrome c oxidase (complex IV, CIV), that cooperate to transfer electrons derived from NADH and succinate to molecular oxygen, creating an electrochemical gradient over the inner membrane that drives transmembrane transport and the ATP synthase. Cytochrome c oxidase is the component of the respiratory chain that catalyzes the reduction of oxygen to water. Electrons originating from reduced cytochrome c in the intermembrane space (IMS) are transferred via the dinuclear copper A center (CU(A)) of subunit 2 and heme A of subunit 1 to the active site in subunit 1, a binuclear center (BNC) formed by heme A3 and copper B (CU(B)). The BNC reduces molecular oxygen to 2 water molecules using 4 electrons from cytochrome c in the IMS and 4 protons from the mitochondrial matrix. The chain is Cytochrome c oxidase subunit 2 (mt-co2) from Gomphosus varius (Bird wrasse).